The sequence spans 208 residues: Calaxin (208 aa).

EF-hand domains are found at residues 64–99 (TDDM…FLHG), 100–135 (TLEE…SLLK), and 145–180 (GVKD…ENLL). Ca(2+)-binding residues include D77, D79, D81, D113, N115, D117, Y119, E124, D158, D160, D162, K164, and D169.

As to quaternary structure, component of the outer dynein arm-docking complex along with ODAD1, ODAD2, ODAD3 and ODAD4.

It localises to the cytoplasm. The protein localises to the cytoskeleton. The protein resides in the cilium axoneme. Its subcellular location is the cell projection. It is found in the cilium. It localises to the flagellum. Functionally, component of the outer dynein arm-docking complex (ODA-DC) that mediates outer dynein arms (ODA) binding onto the doublet microtubule. Seems to regulate the assembly of both ODAs and their axonemal docking complex onto ciliary microtubules. Regulates ciliary and flagellar motility and is required for cilia-driven determination of body laterality. This is Calaxin (clxn) from Xenopus laevis (African clawed frog).